Reading from the N-terminus, the 232-residue chain is 2-C-methyl-D-erythritol 4-phosphate cytidylyltransferase (232 aa).

Belongs to the IspD/TarI cytidylyltransferase family. IspD subfamily.

It carries out the reaction 2-C-methyl-D-erythritol 4-phosphate + CTP + H(+) = 4-CDP-2-C-methyl-D-erythritol + diphosphate. The protein operates within isoprenoid biosynthesis; isopentenyl diphosphate biosynthesis via DXP pathway; isopentenyl diphosphate from 1-deoxy-D-xylulose 5-phosphate: step 2/6. Catalyzes the formation of 4-diphosphocytidyl-2-C-methyl-D-erythritol from CTP and 2-C-methyl-D-erythritol 4-phosphate (MEP). The polypeptide is 2-C-methyl-D-erythritol 4-phosphate cytidylyltransferase (Nitrosospira multiformis (strain ATCC 25196 / NCIMB 11849 / C 71)).